Reading from the N-terminus, the 203-residue chain is Thymidylate kinase (203 aa).

An ATP-binding site is contributed by 10 to 17 (GIDGCGKT).

This sequence belongs to the thymidylate kinase family.

The enzyme catalyses dTMP + ATP = dTDP + ADP. Functionally, phosphorylation of dTMP to form dTDP in both de novo and salvage pathways of dTTP synthesis. The chain is Thymidylate kinase from Thermoanaerobacter pseudethanolicus (strain ATCC 33223 / 39E) (Clostridium thermohydrosulfuricum).